Here is a 2196-residue protein sequence, read N- to C-terminus: Genome polyprotein (2196 aa).

Residue Gly2 is the site of N-myristoyl glycine; by host attachment. The Cytoplasmic portion of the chain corresponds to 2-1506 (GAQVSTQKTG…HVSRAFICLQ (1505 aa)). Residues 568–584 (DLQGDSEHAVESAVSRV) form an amphipathic alpha-helix region. Active-site for protease 2A activity residues include His883 and Asp901. Residues Cys918 and Cys920 each contribute to the Zn(2+) site. Catalysis depends on Cys972, which acts as the For protease 2A activity. Zn(2+)-binding residues include Cys978 and His980. The tract at residues 1112 to 1184 (NNGWLKKFTE…EQSAPSQSDQ (73 aa)) is membrane-binding. The interval 1112-1250 (NNGWLKKFTE…SPGAGKSVAT (139 aa)) is oligomerization. An RNA-binding region spans residues 1133-1137 (AIKIQ). An SF3 helicase domain is found at 1216 to 1372 (EKKMSNYIQF…SMYSQNGKIN (157 aa)). Zn(2+) contacts are provided by Cys1380, Cys1392, and Cys1397. The C4-type; degenerate zinc-finger motif lies at 1380–1397 (CDEECCPVNFKKCCPLVC). The segment at 1424 to 1431 (EYNHRHSV) is RNA-binding. An oligomerization region spans residues 1435–1440 (LEALFQ). Residues 1507 to 1522 (ALTTFVSVAGIIYIIY) lie within the membrane without spanning it. Topologically, residues 1523 to 2196 (KLFAGFQGAY…TLRRKWLDSF (674 aa)) are cytoplasmic. At Tyr1532 the chain carries O-(5'-phospho-RNA)-tyrosine. The region spanning 1552 to 1730 (GPAFEFAVAM…FSAALLKHYF (179 aa)) is the Peptidase C3 domain. Residues His1591, Glu1622, and Cys1698 each act as for protease 3C activity in the active site. The RdRp catalytic domain occupies 1961 to 2077 (GHLIAFDYSG…SYPWPIDASL (117 aa)). 2 residues coordinate Mg(2+): Asp1967 and Asp2063.

The protein belongs to the picornaviruses polyprotein family. In terms of assembly, interacts with capsid protein VP1 and capsid protein VP3 to form heterotrimeric protomers. As to quaternary structure, interacts with capsid protein VP0, and capsid protein VP3 to form heterotrimeric protomers. Five protomers subsequently associate to form pentamers which serve as building blocks for the capsid. Interacts with capsid protein VP2, capsid protein VP3 and capsid protein VP4 following cleavage of capsid protein VP0. Interacts with capsid protein VP1 and capsid protein VP3 in the mature capsid. In terms of assembly, interacts with capsid protein VP0 and capsid protein VP1 to form heterotrimeric protomers. Five protomers subsequently associate to form pentamers which serve as building blocks for the capsid. Interacts with capsid protein VP4 in the mature capsid. Interacts with protein 2C; this interaction may be important for virion morphogenesis. As to quaternary structure, interacts with capsid protein VP1 and capsid protein VP3. Homodimer. In terms of assembly, homohexamer; forms a hexameric ring structure with 6-fold symmetry characteristic of AAA+ ATPases. Interacts (via N-terminus) with host RTN3 (via reticulon domain); this interaction is important for viral replication. Interacts with capsid protein VP3; this interaction may be important for virion morphogenesis. As to quaternary structure, interacts with protein 3CD. Homodimer. Interacts with host GBF1. Interacts (via GOLD domain) with host ACBD3 (via GOLD domain); this interaction allows the formation of a viral protein 3A/ACBD3 heterotetramer with a 2:2 stoichiometry, which will stimulate the recruitment of host PI4KB in order to synthesize PI4P at the viral RNA replication sites. In terms of assembly, interacts with RNA-directed RNA polymerase. As to quaternary structure, interacts with protein 3AB and with RNA-directed RNA polymerase. Interacts with Viral protein genome-linked and with protein 3CD. Requires Mg(2+) as cofactor. Post-translationally, specific enzymatic cleavages in vivo by the viral proteases yield processing intermediates and the mature proteins. Myristoylation is required for the formation of pentamers during virus assembly. Further assembly of 12 pentamers and a molecule of genomic RNA generates the provirion. In terms of processing, during virion maturation, immature virions are rendered infectious following cleavage of VP0 into VP4 and VP2. This maturation seems to be an autocatalytic event triggered by the presence of RNA in the capsid and it is followed by a conformational change infectious virion. Post-translationally, myristoylation is required during RNA encapsidation and formation of the mature virus particle. VPg is uridylylated by the polymerase into VPg-pUpU. This acts as a nucleotide-peptide primer for the genomic RNA replication.

It is found in the virion. The protein resides in the host cytoplasm. It localises to the host cytoplasmic vesicle membrane. Its subcellular location is the host nucleus. It catalyses the reaction a ribonucleoside 5'-triphosphate + H2O = a ribonucleoside 5'-diphosphate + phosphate + H(+). It carries out the reaction Selective cleavage of Tyr-|-Gly bond in the picornavirus polyprotein.. The catalysed reaction is RNA(n) + a ribonucleoside 5'-triphosphate = RNA(n+1) + diphosphate. The enzyme catalyses Selective cleavage of Gln-|-Gly bond in the poliovirus polyprotein. In other picornavirus reactions Glu may be substituted for Gln, and Ser or Thr for Gly.. With respect to regulation, replication or transcription is subject to high level of random mutations by the nucleotide analog ribavirin. Forms an icosahedral capsid of pseudo T=3 symmetry with capsid proteins VP2 and VP3. The capsid is 300 Angstroms in diameter, composed of 60 copies of each capsid protein and enclosing the viral positive strand RNA genome. Capsid protein VP1 mainly forms the vertices of the capsid. Capsid protein VP1 interacts with host cell receptor to provide virion attachment to target host cells. This attachment induces virion internalization. Tyrosine kinases are probably involved in the entry process. After binding to its receptor, the capsid undergoes conformational changes. Capsid protein VP1 N-terminus (that contains an amphipathic alpha-helix) and capsid protein VP4 are externalized. Together, they shape a pore in the host membrane through which viral genome is translocated to host cell cytoplasm. Functionally, forms an icosahedral capsid of pseudo T=3 symmetry with capsid proteins VP2 and VP3. The capsid is 300 Angstroms in diameter, composed of 60 copies of each capsid protein and enclosing the viral positive strand RNA genome. In terms of biological role, lies on the inner surface of the capsid shell. After binding to the host receptor, the capsid undergoes conformational changes. Capsid protein VP4 is released, Capsid protein VP1 N-terminus is externalized, and together, they shape a pore in the host membrane through which the viral genome is translocated into the host cell cytoplasm. Its function is as follows. Component of immature procapsids, which is cleaved into capsid proteins VP4 and VP2 after maturation. Allows the capsid to remain inactive before the maturation step. Cysteine protease that cleaves viral polyprotein and specific host proteins. It is responsible for the autocatalytic cleavage between the P1 and P2 regions, which is the first cleavage occurring in the polyprotein. Also cleaves the host translation initiation factor EIF4G1, in order to shut down the capped cellular mRNA translation. Inhibits the host nucleus-cytoplasm protein and RNA trafficking by cleaving host members of the nuclear pores. Counteracts stress granule formation probably by antagonizing its assembly or promoting its dissassembly. Functionally, plays an essential role in the virus replication cycle by acting as a viroporin. Creates a pore in the host endoplasmic reticulum and as a consequence releases Ca2+ in the cytoplasm of infected cell. In turn, high levels of cytoplasmic calcium may trigger membrane trafficking and transport of viral ER-associated proteins to viroplasms, sites of viral genome replication. In terms of biological role, induces and associates with structural rearrangements of intracellular membranes. Displays RNA-binding, nucleotide binding and NTPase activities. May play a role in virion morphogenesis and viral RNA encapsidation by interacting with the capsid protein VP3. Its function is as follows. Localizes the viral replication complex to the surface of membranous vesicles. Together with protein 3CD binds the Cis-Active RNA Element (CRE) which is involved in RNA synthesis initiation. Acts as a cofactor to stimulate the activity of 3D polymerase, maybe through a nucleid acid chaperone activity. Localizes the viral replication complex to the surface of membranous vesicles. It inhibits host cell endoplasmic reticulum-to-Golgi apparatus transport and causes the disassembly of the Golgi complex, possibly through GBF1 interaction. This would result in depletion of MHC, trail receptors and IFN receptors at the host cell surface. Plays an essential role in viral RNA replication by recruiting ACBD3 and PI4KB at the viral replication sites, thereby allowing the formation of the rearranged membranous structures where viral replication takes place. Functionally, acts as a primer for viral RNA replication and remains covalently bound to viral genomic RNA. VPg is uridylylated prior to priming replication into VPg-pUpU. The oriI viral genomic sequence may act as a template for this. The VPg-pUpU is then used as primer on the genomic RNA poly(A) by the RNA-dependent RNA polymerase to replicate the viral genome. During genome replication, the VPg-RNA linkage is removed by the host TDP2, thereby accelerating replication. During the late stage of the replication cycle, host TDP2 is excluded from sites of viral RNA synthesis and encapsidation, allowing for the generation of progeny virions. In terms of biological role, involved in the viral replication complex and viral polypeptide maturation. It exhibits protease activity with a specificity and catalytic efficiency that is different from protease 3C. Protein 3CD lacks polymerase activity. Protein 3CD binds to the 5'UTR of the viral genome. Its function is as follows. Replicates the viral genomic RNA on the surface of intracellular membranes. May form linear arrays of subunits that propagate along a strong head-to-tail interaction called interface-I. Covalently attaches UMP to a tyrosine of VPg, which is used to prime RNA synthesis. The positive stranded RNA genome is first replicated at virus induced membranous vesicles, creating a dsRNA genomic replication form. This dsRNA is then used as template to synthesize positive stranded RNA genomes. ss(+)RNA genomes are either translated, replicated or encapsidated. Major viral protease that mediates proteolytic processing of the polyprotein. Cleaves host EIF5B, contributing to host translation shutoff. Also cleaves host PABPC1, contributing to host translation shutoff. Cleaves host NLRP1, triggers host N-glycine-mediated degradation of the autoinhibitory NLRP1 N-terminal fragment. This is Genome polyprotein from Homo sapiens (Human).